Here is a 522-residue protein sequence, read N- to C-terminus: Transactivator/viroplasmin protein (522 aa).

Positions 111–126 (QGIQIPQKSEPNSSVA) are enriched in polar residues. Disordered stretches follow at residues 111-133 (QGIQ…AESG) and 491-522 (SADS…KASG).

The protein belongs to the caulimoviridae viroplasmin family.

It localises to the host cytoplasm. In terms of biological role, enhances the ribosomal termination-reinitiation event leading to the translation of major open reading frames on the polycistronic viral RNAs. The polypeptide is Transactivator/viroplasmin protein (Arabidopsis thaliana (Mouse-ear cress)).